The chain runs to 149 residues: Large ribosomal subunit protein uL13 (149 aa).

This sequence belongs to the universal ribosomal protein uL13 family. Part of the 50S ribosomal subunit.

Functionally, this protein is one of the early assembly proteins of the 50S ribosomal subunit, although it is not seen to bind rRNA by itself. It is important during the early stages of 50S assembly. The chain is Large ribosomal subunit protein uL13 from Bifidobacterium adolescentis (strain ATCC 15703 / DSM 20083 / NCTC 11814 / E194a).